Reading from the N-terminus, the 128-residue chain is Large-conductance mechanosensitive channel (128 aa).

Helical transmembrane passes span 10–30 (FAMR…SAFG) and 76–96 (GLFI…FMMI).

The protein belongs to the MscL family. In terms of assembly, homopentamer.

It localises to the cell inner membrane. Its function is as follows. Channel that opens in response to stretch forces in the membrane lipid bilayer. May participate in the regulation of osmotic pressure changes within the cell. The sequence is that of Large-conductance mechanosensitive channel from Haemophilus influenzae (strain PittEE).